Here is a 393-residue protein sequence, read N- to C-terminus: S-adenosylmethionine synthase (393 aa).

Glu-9 serves as a coordination point for Mg(2+). His-15 provides a ligand contact to ATP. Glu-43 contacts K(+). L-methionine is bound by residues Glu-56 and Gln-99. ATP contacts are provided by residues Asp-167 to Lys-169, Ser-235 to Phe-238, Asp-246, Arg-252 to Lys-253, Ala-269, Lys-273, and Lys-277. Asp-246 contributes to the L-methionine binding site. Lys-277 is an L-methionine binding site.

It belongs to the AdoMet synthase family. As to quaternary structure, homotetramer. It depends on Mn(2+) as a cofactor. Mg(2+) serves as cofactor. The cofactor is Co(2+). K(+) is required as a cofactor.

The protein resides in the cytoplasm. The catalysed reaction is L-methionine + ATP + H2O = S-adenosyl-L-methionine + phosphate + diphosphate. Its pathway is amino-acid biosynthesis; S-adenosyl-L-methionine biosynthesis; S-adenosyl-L-methionine from L-methionine: step 1/1. In terms of biological role, catalyzes the formation of S-adenosylmethionine from methionine and ATP. The reaction comprises two steps that are both catalyzed by the same enzyme: formation of S-adenosylmethionine (AdoMet) and triphosphate, and subsequent hydrolysis of the triphosphate. The chain is S-adenosylmethionine synthase (SAMS) from Solanum palustre (Non-tuber-performing potato).